We begin with the raw amino-acid sequence, 770 residues long: MFRYESLEDCPLDEDEDAFQGLGEEDEEIDQFNDDTFGSGAVDDDWQEAHERLAELEEKLPVAADEQTGNGERDEMDLLGDHEENLAERLSKMVIENELEDPAVMRAVQTRPVLQPQPGSLNSSIWDGSEVLRRIRGPLLAQEMPTVSVLEYALPQRPPQGPEDDRDLSERALPRRSTSPIIGSPPVRAVPIGTPPKQMAVPSFNQQILCPKPVHVRPPMPPRYPAPYGERMSPNQLCSVPNSSLLGHPFPPSVPPVLSPLQRAQLLGGAQLQPGRMSPSQFARVPGFVGSPLAAMNPKLLQGRVGQMLPPAPGFRAFFSAPPPATPPPQQHPPGPGPHLQNLRPQAPMFRPDTTHLHPQHRRLLHQRQLQSRNQHRNLNGTGDRGGHRVSHQDHLRKDPYANLMLQREKDWVSKIQMMQLQSTDPYLDDFYYQNYFEKLEKSSAAEEMQGDGPKKERTKLITPQVARLEHAYKPVQFEGSLGKLTVSSVNNPRKMIDAVVTSRSEDDETKEKQVRDKRRKTLVIIEKTYSLLLDVEDYERRYLLSLEEERPALTDERKHKIWSMYDNLRGKLPGQERPSDDHFVQIMCIRKGKRMVARILPFLSTEQAADILMATARNLPFLIKKDAQDEVLPCLLSPFSLLLYHLPSVTVTSLLQQLMNLPQSATAPAPSNSHLTAVLQNKFGLSLLLILLSRGEDLHSSDPTVESTQNNQWTEVMFMATQELLRIPQAALAKPISIPTNLVSLFSRYVDRQKLNLLETKLQLVQGMR.

A disordered region spans residues 1 to 42 (MFRYESLEDCPLDEDEDAFQGLGEEDEEIDQFNDDTFGSGAV). The tract at residues 1–84 (MFRYESLEDC…EMDLLGDHEE (84 aa)) is region A; interaction with DDX6/RCK. The tract at residues 1-397 (MFRYESLEDC…HRVSHQDHLR (397 aa)) is involved in nuclear foci localization. Positions 7–33 (LEDCPLDEDEDAFQGLGEEDEEIDQFN) are enriched in acidic residues. A region N; interaction with decapping machinery region spans residues 85 to 388 (NLAERLSKMV…LNGTGDRGGH (304 aa)). Residues 86–95 (LAERLSKMVI) carry the Nuclear export signal motif. S177 carries the phosphoserine modification. T178 bears the Phosphothreonine mark. Residues S179 and S184 each carry the phosphoserine modification. Residue T194 is modified to Phosphothreonine. 3 positions are modified to asymmetric dimethylarginine: R217, R223, and R263. An involved in RNA-binding region spans residues 223–397 (RYPAPYGERM…HRVSHQDHLR (175 aa)). S278 carries the phosphoserine modification. R284 is modified (asymmetric dimethylarginine). 2 disordered regions span residues 320–341 (SAPPPATPPPQQHPPGPGPHLQ) and 369–394 (QLQSRNQHRNLNGTGDRGGHRVSHQD). Over residues 321–337 (APPPATPPPQQHPPGPG) the composition is skewed to pro residues. The segment covering 369–380 (QLQSRNQHRNLN) has biased composition (low complexity). Residue R385 is modified to Omega-N-methylarginine. Residues 385-394 (RGGHRVSHQD) are compositionally biased toward basic and acidic residues. Residues 389–448 (RVSHQDHLRKDPYANLMLQREKDWVSKIQMMQLQSTDPYLDDFYYQNYFEKLEKSSAAEE) form a region H region. The involved in nuclear speckle localization stretch occupies residues 398–770 (KDPYANLMLQ…TKLQLVQGMR (373 aa)). Residues 449–770 (MQGDGPKKER…TKLQLVQGMR (322 aa)) are region C.

The protein belongs to the PAT1 family. In terms of assembly, interacts (via region A) with DDX6/RCK. Interacts (via region H and region C) with LSM1 and LSM4. Interacts (via region N) with DCP1A, DCP2, EDC3, EDC4 and XRN1. Interacts with the CCR4-NOT complex. Interacts with the Lsm-containing SMN-Sm protein complex. Interacts with EIF4ENIF1/4E-T.

Its subcellular location is the cytoplasm. It is found in the P-body. The protein localises to the nucleus. The protein resides in the PML body. It localises to the nucleus speckle. RNA-binding protein involved in deadenylation-dependent decapping of mRNAs, leading to the degradation of mRNAs. Acts as a scaffold protein that connects deadenylation and decapping machinery. Required for cytoplasmic mRNA processing body (P-body) assembly. The chain is Protein PAT1 homolog 1 (Patl1) from Rattus norvegicus (Rat).